The primary structure comprises 105 residues: Histone H2A-like 1 (105 aa).

Belongs to the histone H2A family. As to quaternary structure, the nucleosome is a histone octamer containing two molecules each of H2A, H2B, H3 and H4 assembled in one H3-H4 heterotetramer and two H2A-H2B heterodimers. May be incorporated into a proportion of nucleosomes, replacing one or more H2A molecules. Interacts with H2BC1/TH2B; preferentially dimerizes with H2BC1/TH2B to form nucleosomes. In terms of tissue distribution, testis-specific.

Its subcellular location is the nucleus. The protein localises to the chromosome. Atypical histone H2A which can replace conventional H2A in some nucleosomes and may play a role during spermatogenesis. Nucleosomes wrap and compact DNA into chromatin, limiting DNA accessibility to the cellular machineries which require DNA as a template. Histones thereby play a central role in transcription regulation, DNA repair, DNA replication and chromosomal stability. DNA accessibility is regulated via a complex set of post-translational modifications of histones, also called histone code, and nucleosome remodeling. This chain is Histone H2A-like 1, found in Mus musculus (Mouse).